The chain runs to 390 residues: Small ribosomal subunit protein uS9m (390 aa).

The disordered stretch occupies residues 368–390; that stretch reads PRIRERKKPGQEGARRKFTWKKR.

This sequence belongs to the universal ribosomal protein uS9 family. As to quaternary structure, component of the mitochondrial ribosome small subunit (28S) which comprises a 12S rRNA and about 30 distinct proteins.

Its subcellular location is the mitochondrion. This Mus musculus (Mouse) protein is Small ribosomal subunit protein uS9m (Mrps9).